The following is a 348-amino-acid chain: MNNILSFDIDEIRDILRGWGEPSYRADQIFDWVYKKLILNPSSMTNLPKGLRQKIAEYFSFDIPKVVKITGEGNTKKYLLELEDGENIETVLISHKNRNTVCVSVQVGCAIGCKFCATGLVGLRRNLNTHEIVGQIILIQKELFEKGDRISNVVYMGMGEPLLNYDNVVKSIRIINREWGLNIGSKHITLSTIGIVPKIYQLGEEDLKVRLAISLHAPNNELRSKIIPINKEYPIEKLLESAFYYAEKTGRRVTFEYVLIKNFNDREEHAIELAGLLKNKPVHVNLIPWNKVPEYPWETSDLKDIFKFKKILSDAGINVTLRISYGSRIKAGCGQLRALYLKSKGELK.

The Proton acceptor role is filled by Glu89. One can recognise a Radical SAM core domain in the interval 95 to 328; it reads HKNRNTVCVS…VTLRISYGSR (234 aa). Cys102 and Cys333 form a disulfide bridge. Positions 109, 113, and 116 each coordinate [4Fe-4S] cluster. Residues 159–160, Ser191, 214–216, and Asn290 contribute to the S-adenosyl-L-methionine site; these read GE and SLH. The active-site S-methylcysteine intermediate is the Cys333.

It belongs to the radical SAM superfamily. RlmN family. The cofactor is [4Fe-4S] cluster.

It is found in the cytoplasm. The enzyme catalyses adenosine(2503) in 23S rRNA + 2 reduced [2Fe-2S]-[ferredoxin] + 2 S-adenosyl-L-methionine = 2-methyladenosine(2503) in 23S rRNA + 5'-deoxyadenosine + L-methionine + 2 oxidized [2Fe-2S]-[ferredoxin] + S-adenosyl-L-homocysteine. It carries out the reaction adenosine(37) in tRNA + 2 reduced [2Fe-2S]-[ferredoxin] + 2 S-adenosyl-L-methionine = 2-methyladenosine(37) in tRNA + 5'-deoxyadenosine + L-methionine + 2 oxidized [2Fe-2S]-[ferredoxin] + S-adenosyl-L-homocysteine. Functionally, specifically methylates position 2 of adenine 2503 in 23S rRNA and position 2 of adenine 37 in tRNAs. This chain is Probable dual-specificity RNA methyltransferase RlmN, found in Dictyoglomus thermophilum (strain ATCC 35947 / DSM 3960 / H-6-12).